A 599-amino-acid chain; its full sequence is Aspartate--tRNA ligase (599 aa).

Residue E180 coordinates L-aspartate. The segment at 204 to 207 is aspartate; sequence QIFK. R226 is a binding site for L-aspartate. ATP is bound by residues 226 to 228 and Q235; that span reads RDE. H454 is a binding site for L-aspartate. ATP is bound at residue E488. Residue R495 participates in L-aspartate binding. Position 540–543 (540–543) interacts with ATP; sequence GLDR.

This sequence belongs to the class-II aminoacyl-tRNA synthetase family. Type 1 subfamily. As to quaternary structure, homodimer.

It localises to the cytoplasm. It catalyses the reaction tRNA(Asp) + L-aspartate + ATP = L-aspartyl-tRNA(Asp) + AMP + diphosphate. Functionally, catalyzes the attachment of L-aspartate to tRNA(Asp) in a two-step reaction: L-aspartate is first activated by ATP to form Asp-AMP and then transferred to the acceptor end of tRNA(Asp). The polypeptide is Aspartate--tRNA ligase (Clostridium beijerinckii (strain ATCC 51743 / NCIMB 8052) (Clostridium acetobutylicum)).